We begin with the raw amino-acid sequence, 295 residues long: Sulfotransferase 1A1 (295 aa).

3'-phosphoadenylyl sulfate is bound at residue 48–53 (KSGTTW). 106–108 (KTH) serves as a coordination point for substrate. Catalysis depends on His108, which acts as the Proton acceptor. 3'-phosphoadenylyl sulfate is bound by residues Arg130, Ser138, Tyr193, 227 to 232 (TSFKEM), and 255 to 259 (FMRKG). A Phosphoserine modification is found at Ser138.

This sequence belongs to the sulfotransferase 1 family. As to quaternary structure, homodimer. In terms of tissue distribution, liver, lung, adrenal, brain, platelets and skin.

It localises to the cytoplasm. The enzyme catalyses a phenol + 3'-phosphoadenylyl sulfate = an aryl sulfate + adenosine 3',5'-bisphosphate + H(+). The catalysed reaction is 17beta-estradiol + 3'-phosphoadenylyl sulfate = 17beta-estradiol 3-sulfate + adenosine 3',5'-bisphosphate + H(+). It catalyses the reaction 4-ethylphenol + 3'-phosphoadenylyl sulfate = 4-ethylphenyl sulfate + adenosine 3',5'-bisphosphate + H(+). It carries out the reaction 4-nitrophenol + 3'-phosphoadenylyl sulfate = 4-nitrophenyl sulfate + adenosine 3',5'-bisphosphate. The enzyme catalyses dopamine + 3'-phosphoadenylyl sulfate = dopamine 3-O-sulfate + adenosine 3',5'-bisphosphate + H(+). The catalysed reaction is dopamine + 3'-phosphoadenylyl sulfate = dopamine 4-O-sulfate + adenosine 3',5'-bisphosphate + H(+). It catalyses the reaction 3,3',5-triiodo-L-thyronine + 3'-phosphoadenylyl sulfate = 3,3',5-triiodo-L-thyronine sulfate + adenosine 3',5'-bisphosphate + H(+). It carries out the reaction 3,3',5'-triiodo-L-thyronine + 3'-phosphoadenylyl sulfate = 3,3',5'-triiodo-L-thyronine sulfate + adenosine 3',5'-bisphosphate + H(+). The enzyme catalyses 3,3'-diiodo-L-thyronine + 3'-phosphoadenylyl sulfate = 3,3'-diiodo-L-thyronine sulfate + adenosine 3',5'-bisphosphate + H(+). The catalysed reaction is L-thyroxine + 3'-phosphoadenylyl sulfate = L-thyroxine sulfate + adenosine 3',5'-bisphosphate + H(+). Sulfotransferase that utilizes 3'-phospho-5'-adenylyl sulfate (PAPS) as sulfonate donor to catalyze the sulfate conjugation of a wide variety of acceptor molecules bearing a hydroxyl or an amine group. Sulfonation increases the water solubility of most compounds, and therefore their renal excretion, but it can also result in bioactivation to form active metabolites. Displays broad substrate specificity for small phenolic compounds. Plays an important role in the sulfonation of endogenous molecules such as steroid hormones. Mediates the sulfate conjugation of a variety of xenobiotics, including the drugs acetaminophen and minoxidil. Mediates also the metabolic activation of carcinogenic N-hydroxyarylamines leading to highly reactive intermediates capable of forming DNA adducts, potentially resulting in mutagenesis. May play a role in gut microbiota-host metabolic interaction. O-sulfonates 4-ethylphenol (4-EP), a dietary tyrosine-derived metabolite produced by gut bacteria. The product 4-EPS crosses the blood-brain barrier and may negatively regulate oligodendrocyte maturation and myelination, affecting the functional connectivity of different brain regions associated with the limbic system. Catalyzes the sulfate conjugation of dopamine. Catalyzes the sulfation of T4 (L-thyroxine/3,5,3',5'-tetraiodothyronine), T3 (3,5,3'-triiodothyronine), rT3 (3,3',5'-triiodothyronine) and 3,3'-T2 (3,3'-diiodothyronine), with a substrate preference of 3,3'-T2 &gt; rT3 &gt; T3 &gt; T4. In Homo sapiens (Human), this protein is Sulfotransferase 1A1 (SULT1A1).